The sequence spans 1254 residues: DNA polymerase gamma (1254 aa).

A compositionally biased stretch (basic and acidic residues) spans 1125–1137; that stretch reads RKKENRIDDENKK. Disordered regions lie at residues 1125–1145 and 1202–1240; these read RKKE…KKNT and YKKK…TNRN. The span at 1208 to 1217 shows a compositional bias: polar residues; the sequence is QARTASSSPI. A compositionally biased stretch (basic residues) spans 1219-1231; sequence KTAKAVHSKKLPA.

Belongs to the DNA polymerase type-A family. The cofactor is Mg(2+).

Its subcellular location is the mitochondrion. It carries out the reaction DNA(n) + a 2'-deoxyribonucleoside 5'-triphosphate = DNA(n+1) + diphosphate. Functionally, involved in the replication of mitochondrial DNA. The sequence is that of DNA polymerase gamma (MIP1) from Saccharomyces cerevisiae (strain ATCC 204508 / S288c) (Baker's yeast).